Reading from the N-terminus, the 228-residue chain is Cytochrome b6-f complex iron-sulfur subunit 2, chloroplastic (228 aa).

A chloroplast-targeting transit peptide spans 1–49; sequence MASSTLSPVTQLCSSKSGLSSVSQCLLLKPMKINSHGLGKDKRMKVKCM. A helical membrane pass occupies residues 71–91; it reads LLLGALSLPTAGMLVPYATFF. One can recognise a Rieske domain in the interval 115–211; it reads ASEWLKTHPP…ADIDDGKVVF (97 aa). [2Fe-2S] cluster contacts are provided by Cys157, His159, Cys175, and His178. Cys162 and Cys177 are joined by a disulfide.

The protein belongs to the Rieske iron-sulfur protein family. As to quaternary structure, the 4 large subunits of the cytochrome b6-f complex are cytochrome b6, subunit IV (17 kDa polypeptide, petD), cytochrome f and the Rieske protein, while the 4 small subunits are petG, petL, petM and petN. The complex functions as a dimer. [2Fe-2S] cluster is required as a cofactor.

Its subcellular location is the plastid. It is found in the chloroplast thylakoid membrane. It carries out the reaction 2 oxidized [plastocyanin] + a plastoquinol + 2 H(+)(in) = 2 reduced [plastocyanin] + a plastoquinone + 4 H(+)(out). In terms of biological role, component of the cytochrome b6-f complex, which mediates electron transfer between photosystem II (PSII) and photosystem I (PSI), cyclic electron flow around PSI, and state transitions. In Nicotiana tabacum (Common tobacco), this protein is Cytochrome b6-f complex iron-sulfur subunit 2, chloroplastic (petC2).